Reading from the N-terminus, the 479-residue chain is Ribosomal RNA small subunit methyltransferase F (479 aa).

S-adenosyl-L-methionine-binding positions include 125-131, Glu149, Asp176, and Asp194; that span reads AAAPGSK. The Nucleophile role is filled by Cys247.

The protein belongs to the class I-like SAM-binding methyltransferase superfamily. RsmB/NOP family.

Its subcellular location is the cytoplasm. It carries out the reaction cytidine(1407) in 16S rRNA + S-adenosyl-L-methionine = 5-methylcytidine(1407) in 16S rRNA + S-adenosyl-L-homocysteine + H(+). Specifically methylates the cytosine at position 1407 (m5C1407) of 16S rRNA. The polypeptide is Ribosomal RNA small subunit methyltransferase F (Escherichia coli O6:H1 (strain CFT073 / ATCC 700928 / UPEC)).